A 241-amino-acid chain; its full sequence is Triosephosphate isomerase (241 aa).

Asn9 to Lys11 is a binding site for substrate. His96 functions as the Electrophile in the catalytic mechanism. The Proton acceptor role is filled by Glu165. Substrate-binding positions include Gly171, Ser204, and Gly225–Gly226.

Belongs to the triosephosphate isomerase family. In terms of assembly, homodimer.

It localises to the cytoplasm. It carries out the reaction D-glyceraldehyde 3-phosphate = dihydroxyacetone phosphate. The protein operates within carbohydrate biosynthesis; gluconeogenesis. Its pathway is carbohydrate degradation; glycolysis; D-glyceraldehyde 3-phosphate from glycerone phosphate: step 1/1. Involved in the gluconeogenesis. Catalyzes stereospecifically the conversion of dihydroxyacetone phosphate (DHAP) to D-glyceraldehyde-3-phosphate (G3P). This is Triosephosphate isomerase from Prochlorococcus marinus subsp. pastoris (strain CCMP1986 / NIES-2087 / MED4).